The chain runs to 401 residues: Acetate kinase (401 aa).

Asn7 is a binding site for Mg(2+). Lys14 lines the ATP pocket. Substrate is bound at residue Arg91. The Proton donor/acceptor role is filled by Asp148. Residues 208–212, 283–285, and 332–336 each bind ATP; these read HLGNG, DFR, and GVGEN. Residue Glu385 coordinates Mg(2+).

This sequence belongs to the acetokinase family. As to quaternary structure, homodimer. The cofactor is Mg(2+). It depends on Mn(2+) as a cofactor.

The protein localises to the cytoplasm. The enzyme catalyses acetate + ATP = acetyl phosphate + ADP. It participates in metabolic intermediate biosynthesis; acetyl-CoA biosynthesis; acetyl-CoA from acetate: step 1/2. Catalyzes the formation of acetyl phosphate from acetate and ATP. Can also catalyze the reverse reaction. This chain is Acetate kinase, found in Thermoanaerobacter pseudethanolicus (strain ATCC 33223 / 39E) (Clostridium thermohydrosulfuricum).